The sequence spans 410 residues: Secreted protein PRY1 (410 aa).

The signal sequence occupies residues 1-20; the sequence is MKQNYILSIILCYLLANVHS. Disordered stretches follow at residues 64–86, 102–132, and 148–260; these read PAPV…STPS, SDSD…SSSS, and SSSS…SSSS. A compositionally biased stretch (low complexity) spans 148 to 179; sequence SSSSTPSSISQQQQQQQGSPASGSNSPNSAQP. The span at 197 to 211 shows a compositional bias: gly residues; that stretch reads SGLGSGFGSGFGSGS. A compositionally biased stretch (low complexity) spans 212–260; it reads GSDSDSGSGLPSASSSTIIQQQPSSSNIGSSSTSSSSSSSSSSSSSSSS. The SCP domain maps to 283 to 394; that stretch reads LDAHNKYRAQ…NWGLYVVCEY (112 aa).

The protein belongs to the CRISP family.

The protein resides in the secreted. Its function is as follows. Secreted protein that acts as a virulence factor during infections. This is Secreted protein PRY1 (PRY1) from Candida albicans (strain SC5314 / ATCC MYA-2876) (Yeast).